The chain runs to 199 residues: Hematopoietic prostaglandin D synthase (199 aa).

The 78-residue stretch at 2-79 folds into the GST N-terminal domain; it reads PNYKLTYFNL…YLARESGLAG (78 aa). Residues Y8, R14, W39, 49–51, and 63–64 each bind glutathione; these read GKV and QS. The GST C-terminal domain maps to 81–199; that stretch reads TPVEQALADA…WIQKRPKTAI (119 aa).

Belongs to the GST superfamily. Sigma family. The cofactor is glutathione. Highly expressed in liver, kidney, small intestine and colon, moderately in pancreas, bone marrow, lung and ovary, and expressed at low levels in spleen, thymus, heart and brain. Not detected in oviduct or skin (at protein level). Expressed in liver.

It localises to the cytoplasm. It catalyses the reaction prostaglandin H2 = prostaglandin D2. The enzyme catalyses RX + glutathione = an S-substituted glutathione + a halide anion + H(+). It carries out the reaction 2-glyceryl-prostaglandin H2 = 2-glyceryl-prostaglandin D2. Its function is as follows. Bifunctional enzyme which catalyzes both the conversion of PGH2 to PGD2, a prostaglandin involved in smooth muscle contraction/relaxation and a potent inhibitor of platelet aggregation, and the conjugation of glutathione with a wide range of aryl halides, organic isothiocyanates and alpha,beta-unsaturated carbonyls. Also exhibits low glutathione-peroxidase activity towards cumene hydroperoxide and t-butyl hydroperoxide. The chain is Hematopoietic prostaglandin D synthase (HPGDS) from Gallus gallus (Chicken).